Consider the following 714-residue polypeptide: DNA ligase (714 aa).

NAD(+)-binding positions include 47–51, 96–97, and glutamate 130; these read DAAYD and SL. Catalysis depends on lysine 132, which acts as the N6-AMP-lysine intermediate. NAD(+) is bound by residues arginine 153, glutamate 190, lysine 306, and lysine 330. Zn(2+)-binding residues include cysteine 435, cysteine 438, cysteine 453, and cysteine 459. Residues 636-714 form the BRCT domain; that stretch reads RNDSAVAGKT…EDEWLKLIEG (79 aa).

This sequence belongs to the NAD-dependent DNA ligase family. LigA subfamily. Requires Mg(2+) as cofactor. Mn(2+) is required as a cofactor.

The enzyme catalyses NAD(+) + (deoxyribonucleotide)n-3'-hydroxyl + 5'-phospho-(deoxyribonucleotide)m = (deoxyribonucleotide)n+m + AMP + beta-nicotinamide D-nucleotide.. Its function is as follows. DNA ligase that catalyzes the formation of phosphodiester linkages between 5'-phosphoryl and 3'-hydroxyl groups in double-stranded DNA using NAD as a coenzyme and as the energy source for the reaction. It is essential for DNA replication and repair of damaged DNA. This chain is DNA ligase, found in Nitrobacter hamburgensis (strain DSM 10229 / NCIMB 13809 / X14).